The sequence spans 103 residues: uncharacterized protein (103 aa).

This is an uncharacterized protein from Archaeoglobus fulgidus (strain ATCC 49558 / DSM 4304 / JCM 9628 / NBRC 100126 / VC-16).